The primary structure comprises 483 residues: GTPase Der (483 aa).

EngA-type G domains are found at residues 3–167 (FTLA…GEER) and 212–387 (LRIA…EIWN). GTP-binding positions include 9-16 (GRPNVGKS), 56-60 (DTAGL), 119-122 (NKAE), 218-225 (GRPNAGKS), 265-269 (DTAGM), and 330-333 (NKWD). The KH-like domain occupies 388–472 (RRISTGRLNR…PIRLSLRTSD (85 aa)).

This sequence belongs to the TRAFAC class TrmE-Era-EngA-EngB-Septin-like GTPase superfamily. EngA (Der) GTPase family. In terms of assembly, associates with the 50S ribosomal subunit.

GTPase that plays an essential role in the late steps of ribosome biogenesis. This chain is GTPase Der, found in Brucella suis biovar 1 (strain 1330).